The primary structure comprises 265 residues: RNA polymerase sigma factor SigI2 (265 aa).

The short motif at 71–84 is the Polymerase core binding element; that stretch reads DEFSVGLAAFNEAI. Positions 211–230 form a DNA-binding region, H-T-H motif; the sequence is KTELLKLLKINKKTIERNRT.

The protein belongs to the sigma-70 factor family. SigI subfamily. In terms of assembly, interacts with RsgI2.

It is found in the cytoplasm. With respect to regulation, negatively regulated by the anti-sigma-I factor RsgI2. Binding of the polysaccharide substrate to RsgI2 may lead to the release and activation of SigI2. Functionally, sigma factors are initiation factors that promote the attachment of RNA polymerase to specific initiation sites and are then released. This sigma factor is involved in regulation of cellulosomal genes via an external polysaccharide-sensing mechanism. This is RNA polymerase sigma factor SigI2 from Acetivibrio thermocellus (strain ATCC 27405 / DSM 1237 / JCM 9322 / NBRC 103400 / NCIMB 10682 / NRRL B-4536 / VPI 7372) (Clostridium thermocellum).